A 402-amino-acid polypeptide reads, in one-letter code: uncharacterized protein (402 aa).

The N-terminal stretch at Met-1 to Gly-44 is a signal peptide. The interval Asn-53 to Asn-79 is disordered.

This sequence belongs to the bacterial solute-binding protein 1 family. WtpA subfamily.

This is an uncharacterized protein from Saccharolobus solfataricus (strain ATCC 35092 / DSM 1617 / JCM 11322 / P2) (Sulfolobus solfataricus).